Consider the following 124-residue polypeptide: Small ribosomal subunit protein uS12 (124 aa).

The disordered stretch occupies residues 1 to 28 (MPTISQLIGSERKRLTRKTKSPALKSCP). Position 89 is a 3-methylthioaspartic acid (aspartate 89). Residues 104-124 (TAGVKDRRQSRSKYGAKAPKD) form a disordered region.

Belongs to the universal ribosomal protein uS12 family. Part of the 30S ribosomal subunit. Contacts proteins S8 and S17. May interact with IF1 in the 30S initiation complex.

With S4 and S5 plays an important role in translational accuracy. In terms of biological role, interacts with and stabilizes bases of the 16S rRNA that are involved in tRNA selection in the A site and with the mRNA backbone. Located at the interface of the 30S and 50S subunits, it traverses the body of the 30S subunit contacting proteins on the other side and probably holding the rRNA structure together. The combined cluster of proteins S8, S12 and S17 appears to hold together the shoulder and platform of the 30S subunit. This is Small ribosomal subunit protein uS12 from Prochlorococcus marinus (strain MIT 9312).